We begin with the raw amino-acid sequence, 448 residues long: uncharacterized protein (448 aa).

N6-(pyridoxal phosphate)lysine is present on lysine 280.

The protein belongs to the class-III pyridoxal-phosphate-dependent aminotransferase family.

Its subcellular location is the cytoplasm. It localises to the mitochondrion. This is an uncharacterized protein from Schizosaccharomyces pombe (strain 972 / ATCC 24843) (Fission yeast).